The following is a 348-amino-acid chain: Phosphate acyltransferase (348 aa).

It belongs to the PlsX family. As to quaternary structure, homodimer. Probably interacts with PlsY.

It localises to the cytoplasm. It catalyses the reaction a fatty acyl-[ACP] + phosphate = an acyl phosphate + holo-[ACP]. It participates in lipid metabolism; phospholipid metabolism. In terms of biological role, catalyzes the reversible formation of acyl-phosphate (acyl-PO(4)) from acyl-[acyl-carrier-protein] (acyl-ACP). This enzyme utilizes acyl-ACP as fatty acyl donor, but not acyl-CoA. In Lactiplantibacillus plantarum (strain ATCC BAA-793 / NCIMB 8826 / WCFS1) (Lactobacillus plantarum), this protein is Phosphate acyltransferase.